Consider the following 133-residue polypeptide: ATP synthase epsilon chain (133 aa).

The segment at 81 to 110 (AAERPEQIDTERARKAKERAEQRLASEHVD) is disordered.

This sequence belongs to the ATPase epsilon chain family. In terms of assembly, F-type ATPases have 2 components, CF(1) - the catalytic core - and CF(0) - the membrane proton channel. CF(1) has five subunits: alpha(3), beta(3), gamma(1), delta(1), epsilon(1). CF(0) has three main subunits: a, b and c.

It is found in the cell membrane. Its function is as follows. Produces ATP from ADP in the presence of a proton gradient across the membrane. The sequence is that of ATP synthase epsilon chain from Shouchella clausii (strain KSM-K16) (Alkalihalobacillus clausii).